We begin with the raw amino-acid sequence, 293 residues long: Ribosomal RNA small subunit methyltransferase A (293 aa).

N33, V35, G60, E81, D111, and N130 together coordinate S-adenosyl-L-methionine.

The protein belongs to the class I-like SAM-binding methyltransferase superfamily. rRNA adenine N(6)-methyltransferase family. RsmA subfamily.

It localises to the cytoplasm. The enzyme catalyses adenosine(1518)/adenosine(1519) in 16S rRNA + 4 S-adenosyl-L-methionine = N(6)-dimethyladenosine(1518)/N(6)-dimethyladenosine(1519) in 16S rRNA + 4 S-adenosyl-L-homocysteine + 4 H(+). Its function is as follows. Specifically dimethylates two adjacent adenosines (A1518 and A1519) in the loop of a conserved hairpin near the 3'-end of 16S rRNA in the 30S particle. May play a critical role in biogenesis of 30S subunits. This Corynebacterium glutamicum (strain ATCC 13032 / DSM 20300 / JCM 1318 / BCRC 11384 / CCUG 27702 / LMG 3730 / NBRC 12168 / NCIMB 10025 / NRRL B-2784 / 534) protein is Ribosomal RNA small subunit methyltransferase A.